The following is a 207-amino-acid chain: Ribosomal RNA large subunit methyltransferase E (207 aa).

Positions 56, 58, 76, 94, and 116 each coordinate S-adenosyl-L-methionine. K156 (proton acceptor) is an active-site residue.

This sequence belongs to the class I-like SAM-binding methyltransferase superfamily. RNA methyltransferase RlmE family.

The protein localises to the cytoplasm. The enzyme catalyses uridine(2552) in 23S rRNA + S-adenosyl-L-methionine = 2'-O-methyluridine(2552) in 23S rRNA + S-adenosyl-L-homocysteine + H(+). Its function is as follows. Specifically methylates the uridine in position 2552 of 23S rRNA at the 2'-O position of the ribose in the fully assembled 50S ribosomal subunit. In Desulfatibacillum aliphaticivorans, this protein is Ribosomal RNA large subunit methyltransferase E.